Here is a 575-residue protein sequence, read N- to C-terminus: Adenine deaminase (575 aa).

This sequence belongs to the metallo-dependent hydrolases superfamily. Adenine deaminase family. Requires Mn(2+) as cofactor.

The catalysed reaction is adenine + H2O + H(+) = hypoxanthine + NH4(+). The protein is Adenine deaminase of Nitratidesulfovibrio vulgaris (strain ATCC 29579 / DSM 644 / CCUG 34227 / NCIMB 8303 / VKM B-1760 / Hildenborough) (Desulfovibrio vulgaris).